A 174-amino-acid polypeptide reads, in one-letter code: RNA pyrophosphohydrolase (174 aa).

Residues Gly6–Lys149 enclose the Nudix hydrolase domain. The Nudix box signature appears at Gly38 to Gly59.

This sequence belongs to the Nudix hydrolase family. RppH subfamily. The cofactor is a divalent metal cation.

Its function is as follows. Accelerates the degradation of transcripts by removing pyrophosphate from the 5'-end of triphosphorylated RNA, leading to a more labile monophosphorylated state that can stimulate subsequent ribonuclease cleavage. In Neisseria meningitidis serogroup A / serotype 4A (strain DSM 15465 / Z2491), this protein is RNA pyrophosphohydrolase.